The sequence spans 444 residues: Exodeoxyribonuclease 7 large subunit (444 aa).

This sequence belongs to the XseA family. As to quaternary structure, heterooligomer composed of large and small subunits.

It localises to the cytoplasm. The enzyme catalyses Exonucleolytic cleavage in either 5'- to 3'- or 3'- to 5'-direction to yield nucleoside 5'-phosphates.. Functionally, bidirectionally degrades single-stranded DNA into large acid-insoluble oligonucleotides, which are then degraded further into small acid-soluble oligonucleotides. The chain is Exodeoxyribonuclease 7 large subunit from Xylella fastidiosa (strain 9a5c).